Here is a 532-residue protein sequence, read N- to C-terminus: uncharacterized protein (532 aa).

3 disordered regions span residues 26 to 84 (KALR…TDSE), 97 to 129 (VFDESVSSDTDSEESHEEKRILPLGTPGQQVGR), and 157 to 470 (SKAA…HTCQ). Low complexity predominate over residues 30–40 (GNNNGSSTSGG). The span at 67–80 (DIISQARRQVSLSR) shows a compositional bias: polar residues. The segment covering 157 to 181 (SKAAGEESKRHAHFESIQEEEKISE) has biased composition (basic and acidic residues). Over residues 198–213 (IQSGSESSDSDSIIFD) the composition is skewed to low complexity. The span at 237 to 249 (VEKKIEKPAVKEQ) shows a compositional bias: basic and acidic residues. Low complexity-rich tracts occupy residues 259–290 (PTPTESSFESSSDSSSTSESSTSSESSSSASE), 298–315 (ESQVSSSKTSTSKASSSK), and 326–335 (SSSSSASTIS). A compositionally biased stretch (basic residues) spans 347–356 (KTKKPDKKRA). 4 stretches are compositionally biased toward basic and acidic residues: residues 357 to 368 (KPDDIRQNKKPE), 389 to 403 (STVRETNRTLEESLK), 410 to 419 (KSSEKMEKPR), and 437 to 448 (RDAEREQDIERR). Residues 449-461 (REKRARRFRSRRR) show a composition bias toward basic residues.

This is an uncharacterized protein from Caenorhabditis elegans.